Here is a 265-residue protein sequence, read N- to C-terminus: Exosome complex component Rrp4 (265 aa).

The S1 motif domain maps to 65–137 (GDNVIGKIVD…EVNNIDLTTK (73 aa)). A KH domain is found at 147–205 (KGGQIVKITPSRVPRVIGRGGSMINMIKKLTMTRIIVGQNGWIWVSGKNDALEKLAIEA). A disordered region spans residues 241–265 (EIPKLEEEPQGEDEVNGNDGEARGA).

The protein belongs to the RRP4 family. Component of the archaeal exosome complex. Forms a trimer of Rrp4 and/or Csl4 subunits. The trimer associates with a hexameric ring-like arrangement composed of 3 Rrp41-Rrp42 heterodimers.

The protein localises to the cytoplasm. In terms of biological role, non-catalytic component of the exosome, which is a complex involved in RNA degradation. Increases the RNA binding and the efficiency of RNA degradation. Confers strong poly(A) specificity to the exosome. This Pyrococcus abyssi (strain GE5 / Orsay) protein is Exosome complex component Rrp4.